The following is a 144-amino-acid chain: D-aminoacyl-tRNA deacylase (144 aa).

The short motif at 136 to 137 is the Gly-cisPro motif, important for rejection of L-amino acids element; that stretch reads GP.

The protein belongs to the DTD family. Homodimer.

Its subcellular location is the cytoplasm. It catalyses the reaction glycyl-tRNA(Ala) + H2O = tRNA(Ala) + glycine + H(+). The enzyme catalyses a D-aminoacyl-tRNA + H2O = a tRNA + a D-alpha-amino acid + H(+). Functionally, an aminoacyl-tRNA editing enzyme that deacylates mischarged D-aminoacyl-tRNAs. Also deacylates mischarged glycyl-tRNA(Ala), protecting cells against glycine mischarging by AlaRS. Acts via tRNA-based rather than protein-based catalysis; rejects L-amino acids rather than detecting D-amino acids in the active site. By recycling D-aminoacyl-tRNA to D-amino acids and free tRNA molecules, this enzyme counteracts the toxicity associated with the formation of D-aminoacyl-tRNA entities in vivo and helps enforce protein L-homochirality. The sequence is that of D-aminoacyl-tRNA deacylase from Pasteurella multocida (strain Pm70).